The following is a 209-amino-acid chain: Small ribosomal subunit protein uS4 (209 aa).

Positions 22–45 (RGRNPLLRKPNPPGQHGMQRKKKS) are disordered. The S4 RNA-binding domain maps to 93-154 (CRLDNIVYRL…KSRRLAIVTE (62 aa)).

The protein belongs to the universal ribosomal protein uS4 family. As to quaternary structure, part of the 30S ribosomal subunit. Contacts protein S5. The interaction surface between S4 and S5 is involved in control of translational fidelity.

One of the primary rRNA binding proteins, it binds directly to 16S rRNA where it nucleates assembly of the body of the 30S subunit. In terms of biological role, with S5 and S12 plays an important role in translational accuracy. The polypeptide is Small ribosomal subunit protein uS4 (Chlamydia muridarum (strain MoPn / Nigg)).